The primary structure comprises 3491 residues: Genome polyprotein (3491 aa).

One can recognise a Fe2OG dioxygenase domain in the interval 183–277 (KYNTALVQVY…RISITFRNQI (95 aa)). Fe cation is bound by residues H201, D203, and H259. A 2-oxoglutarate-binding site is contributed by R268. Positions 559–588 (DSASDNDVETMKKSEKRRKRRKRNPPPVRQ) are disordered. Basic residues predominate over residues 572–582 (SEKRRKRRKRN). The Peptidase S30 domain maps to 589–745 (VITRAPVSNI…DCLADDYLQY (157 aa)). Catalysis depends on for P1 proteinase activity residues H640, D651, and S692. The region spanning 948–1070 (VHVPLEGLCF…RNGCQEYRVG (123 aa)) is the Peptidase C6 domain. Active-site for helper component proteinase activity residues include C956 and H1029. In terms of domain architecture, Helicase ATP-binding spans 1540 to 1692 (TLTSSVKREF…TMHPVEVVNM (153 aa)). Residue 1553 to 1560 (GFVGSGKS) coordinates ATP. Positions 1642–1645 (DESH) match the DEAH box motif. The Helicase C-terminal domain occupies 1696-1869 (SFEDFAIGQR…NVPPIFDNVD (174 aa)). Y2238 bears the O-(5'-phospho-RNA)-tyrosine mark. The region spanning 2354–2570 (GRSTIKSGNN…LDVGSNNAIR (217 aa)) is the Peptidase C4 domain. Catalysis depends on for nuclear inclusion protein A activity residues H2400, D2435, and C2504. One can recognise a RdRp catalytic domain in the interval 2850 to 2974 (FVYGTGDGSQ…AIHPDRESIL (125 aa)). Disordered stretches follow at residues 3200–3279 (MPQA…RKGL) and 3471–3491 (RHTT…AMMA). A compositionally biased stretch (basic and acidic residues) spans 3236–3248 (RLSPERIVRHDDD). The residue at position 3473 (T3473) is a Phosphothreonine.

Belongs to the potyviridae genome polyprotein family. The cofactor is Fe(2+). Post-translationally, VPg is uridylylated by the polymerase and is covalently attached to the 5'-end of the genomic RNA. This uridylylated form acts as a nucleotide-peptide primer for the polymerase. In terms of processing, genome polyprotein of potyviruses undergoes post-translational proteolytic processing by the main proteinase NIa-pro resulting in the production of at least ten individual proteins. The P1 proteinase and the HC-pro cleave only their respective C-termini autocatalytically. 6K1 is essential for proper proteolytic separation of P3 from CI.

Its subcellular location is the host cytoplasmic vesicle. The protein resides in the virion. It carries out the reaction RNA(n) + a ribonucleoside 5'-triphosphate = RNA(n+1) + diphosphate. The catalysed reaction is Hydrolyzes glutaminyl bonds, and activity is further restricted by preferences for the amino acids in P6 - P1' that vary with the species of potyvirus, e.g. Glu-Xaa-Xaa-Tyr-Xaa-Gln-|-(Ser or Gly) for the enzyme from tobacco etch virus. The natural substrate is the viral polyprotein, but other proteins and oligopeptides containing the appropriate consensus sequence are also cleaved.. It catalyses the reaction Hydrolyzes a Gly-|-Gly bond at its own C-terminus, commonly in the sequence -Tyr-Xaa-Val-Gly-|-Gly, in the processing of the potyviral polyprotein.. In terms of biological role, required for aphid transmission and also has proteolytic activity. Only cleaves a Gly-Gly dipeptide at its own C-terminus. Interacts with virions and aphid stylets. Acts as a suppressor of RNA-mediated gene silencing, also known as post-transcriptional gene silencing (PTGS), a mechanism of plant viral defense that limits the accumulation of viral RNAs. May have RNA-binding activity. Its function is as follows. Has helicase activity. It may be involved in replication. Functionally, indispensable for virus replication. Reduces the abundance of host transcripts related to jasmonic acid biosynthesis therefore altering the host defenses. In order to increase its own stability, decreases host protein degradation pathways. Indispensable for virus replication. In terms of biological role, mediates the cap-independent, EIF4E-dependent translation of viral genomic RNAs. Binds to the cap-binding site of host EIF4E and thus interferes with the host EIF4E-dependent mRNA export and translation. VPg-RNA directly binds EIF4E and is a template for transcription. Also forms trimeric complexes with EIF4E-EIF4G, which are templates for translation. Its function is as follows. Has RNA-binding and proteolytic activities. Functionally, an RNA-dependent RNA polymerase that plays an essential role in the virus replication. Involved in aphid transmission, cell-to-cell and systemis movement, encapsidation of the viral RNA and in the regulation of viral RNA amplification. The chain is Genome polyprotein from Blackberry virus Y (isolate Blackberry plant/USA:Arkansas/C3ARK/2005) (BVY).